A 95-amino-acid chain; its full sequence is Aspartyl/glutamyl-tRNA(Asn/Gln) amidotransferase subunit C (95 aa).

Belongs to the GatC family. As to quaternary structure, heterotrimer of A, B and C subunits.

It catalyses the reaction L-glutamyl-tRNA(Gln) + L-glutamine + ATP + H2O = L-glutaminyl-tRNA(Gln) + L-glutamate + ADP + phosphate + H(+). The enzyme catalyses L-aspartyl-tRNA(Asn) + L-glutamine + ATP + H2O = L-asparaginyl-tRNA(Asn) + L-glutamate + ADP + phosphate + 2 H(+). Functionally, allows the formation of correctly charged Asn-tRNA(Asn) or Gln-tRNA(Gln) through the transamidation of misacylated Asp-tRNA(Asn) or Glu-tRNA(Gln) in organisms which lack either or both of asparaginyl-tRNA or glutaminyl-tRNA synthetases. The reaction takes place in the presence of glutamine and ATP through an activated phospho-Asp-tRNA(Asn) or phospho-Glu-tRNA(Gln). The sequence is that of Aspartyl/glutamyl-tRNA(Asn/Gln) amidotransferase subunit C from Ruegeria sp. (strain TM1040) (Silicibacter sp.).